Reading from the N-terminus, the 291-residue chain is Protein CMSS1 (291 aa).

Positions 1-96 are disordered; sequence MADDLGDEWW…KKTITDVLTS (96 aa). Residues 17 to 27 show a composition bias toward acidic residues; the sequence is DVPEVEEETEH. Residues 58-79 show a composition bias toward basic and acidic residues; sequence VKKECFITQERSEEKPDNESNK.

The protein belongs to the CMS1 family.

This Danio rerio (Zebrafish) protein is Protein CMSS1 (cmss1).